The chain runs to 1122 residues: DNA polymerase (1122 aa).

Belongs to the DNA polymerase type-B family. Heterodimer with the terminal protein; this heterodimer binds to bp 9 to 18 of the genome. Forms a complex with viral pTP, DBP and hosts NFIA and POU2F1/OCT1 for initiation of replication.

The protein resides in the host nucleus. It catalyses the reaction DNA(n) + a 2'-deoxyribonucleoside 5'-triphosphate = DNA(n+1) + diphosphate. In terms of biological role, eukaryotic-type DNA polymerase involved in viral genomic replication. DNA synthesis is protein primed, and acts in a strand displacement replication. Assembles in complex with viral pTP, DBP, host NFIA and host POU2F1/OCT1 on viral origin of replication. The polymerase covalently transfers dCMP onto pTP, thereby initiating complementary strand synthesis. The polypeptide is DNA polymerase (Human adenovirus B serotype 7 (HAdV-7)).